Reading from the N-terminus, the 386-residue chain is Acyl-CoA ligase lcsD (386 aa).

Positions Glu62–Gln132 are SBD1. Ala107–Lys115 is a binding site for ATP. An SBD2 region spans residues Gly133–Tyr195. Residue Thr137 participates in substrate binding. Residues Asp216 and Arg235 each contribute to the ATP site. Residues Arg243–Leu245 and His313–Gly316 each bind CoA. Residue Lys331 coordinates ATP. The segment at Arg352–Asp386 is disordered.

The protein belongs to the ATP-dependent AMP-binding enzyme family.

It participates in secondary metabolite biosynthesis. Its function is as follows. Acyl-CoA ligase; part of the gene cluster that mediates the biosynthesis of the lipopeptide antibiotics leucinostatins that show extensive biological activities, including antimalarial, antiviral, antibacterial, antifungal, and antitumor activities, as well as phytotoxic. Leucinostatin A contains nine amino acid residues, including the unusual amino acid 4-methyl-L-proline (MePro), 2-amino-6-hydroxy-4-methyl-8-oxodecanoic acid (AHyMeOA), 3-hydroxyleucine (HyLeu), alpha-aminoisobutyric acid (AIB), beta-Ala, a 4-methylhex-2-enoic acid at the N-terminus as well as a N1,N1-dimethylpropane-1,2-diamine (DPD) at the C-terminus. The biosynthesis of leucinostatins is probably initiated with the assembly of 4-methylhex-2-enoic acid by a reducing PKS. Two reducing polyketide synthases, lcsB and lcsC, have been identified in the cluster and it is not clear which is the one that assembles 4-methylhex-2-enoic acid since both contain KS, AT, DH, cMT, ER, KR and ACP domains. The polyketide residue might be transferred to the NRPS lcsA, mediated by two additional enzymes, the acyl-CoA ligase lcsD and the thioesterase lcsE. The linear polyketide carboxylic acid, which is released from PKS, is converted to a CoA thioester by lcsD, and then lcsE hydrolyzes the thiol bond and shuttles the polyketide intermediate to lcsA. The C domain of the first module catalyzed the condensation of 4-methylhex-2-enoic acid and MePro carried by domain A1, followed by successive condensations of nine amino acids to trigger the elongation of the linear peptide. A5 and A6 domains of lcsA are proposed to incorporate leucine, A2 AHyMeOA, and A3 incorporates HyLeu. A4, A7 and A8 incorporate AIB. The AHyMeOA in leucinostatin A activated by the A2 might be produced by the second PKS (lcsB or lcsC) present within the cluster. The MePro is probably produced via leucine cyclization and may originate from a separate pathway, independent of the cluster. Another nonproteinogenic amino acid, beta-Ala, could be produced by an aspartic acid decarboxylase also localized outside of the cluster. Two candidates are VFPBJ_01400 and VFPBJ_10476. The final peptide scaffold may be released by the NAD(P)H-dependent thioester reductase (TE) at the C-terminal region of lcsA. Transamination of the lcsA product by the transaminase lcsP may produce DPD at the C-terminus. Further hydroxylation steps performed alternatively by the cytochrome P450 monooxygenases lcsI, lcsK and lcsN then yield the non-methylated leucinostatins precursor. It is also possible that leucines can be hydroxylated prior to their incorporation into the peptide. Varying extents of methylation then lead to the formation of leucinostatins A and B. This Purpureocillium lilacinum (Paecilomyces lilacinus) protein is Acyl-CoA ligase lcsD.